The primary structure comprises 141 residues: Hemoglobin subunit alpha-D (141 aa).

Residues 1-141 (VLTAEDKKLI…VAAVLAEKYR (141 aa)) form the Globin domain. Positions 58 and 87 each coordinate heme b.

It belongs to the globin family. As to quaternary structure, heterotetramer of two alpha-D chains and two beta chains. In terms of tissue distribution, red blood cells.

Functionally, involved in oxygen transport from the lung to the various peripheral tissues. This is Hemoglobin subunit alpha-D (HBAD) from Sturnus vulgaris (Starling).